The primary structure comprises 852 residues: Leucine--tRNA ligase (852 aa).

The short motif at 41 to 51 (PYPSGRIHIGH) is the 'HIGH' region element. The short motif at 623–627 (KMSKS) is the 'KMSKS' region element. An ATP-binding site is contributed by Lys626.

Belongs to the class-I aminoacyl-tRNA synthetase family.

It is found in the cytoplasm. The catalysed reaction is tRNA(Leu) + L-leucine + ATP = L-leucyl-tRNA(Leu) + AMP + diphosphate. This is Leucine--tRNA ligase from Ruegeria pomeroyi (strain ATCC 700808 / DSM 15171 / DSS-3) (Silicibacter pomeroyi).